The sequence spans 383 residues: MKIDFASSRQSTLGVEWELALVNAQTGELASVANEVLRGVSANHPELNEDDEHPHIKQELLLNTVELVTGICETVAQAKADLSSSLAAVREVTDPMGVEVFCAGSHPFSPPQLQPVTDKARYAKLIDRTQWWGRQMVIYGVHVHVGLDSRDKVLPVLDGLVNYFPHFQALSASSPFWGGEDTGYASQRALMFQQLPTAGLPFQFSTWAEYESYVQDMFTTGVIDTISEIRWDIRPVPNLGTIEMRICDGLATLEEVGAIAALTQCLVDEFSTILDNGGTIPTMPPWHVQENKWRAARYGLEAIIILDAEGNEQLVTDHLLETLNRLEPVAAKLGCSDELADVEKIISRGAGYQRQRRVAAEHGGDLRAVVLDLVKQMRNGPTA.

This sequence belongs to the glutamate--cysteine ligase type 2 family. YbdK subfamily.

It catalyses the reaction L-cysteine + L-glutamate + ATP = gamma-L-glutamyl-L-cysteine + ADP + phosphate + H(+). Its function is as follows. ATP-dependent carboxylate-amine ligase which exhibits weak glutamate--cysteine ligase activity. The protein is Putative glutamate--cysteine ligase 2-1 of Arthrobacter sp. (strain FB24).